Reading from the N-terminus, the 384-residue chain is Probable endopolygalacturonase C (384 aa).

An N-terminal signal peptide occupies residues 1-19 (MVRQLILISSLLAAVAVRA). Positions 20–40 (APADPAHPMVTEAPDVNLVEK) are excised as a propeptide. Cys-45 and Cys-63 are joined by a disulfide. 2 PbH1 repeats span residues 176–207 (STDL…DIGE) and 208–229 (STYI…AINS). The active-site Proton donor is the Asp-222. Cys-224 and Cys-240 are oxidised to a cystine. His-244 is an active-site residue. PbH1 repeat units lie at residues 254–280 (RDDN…RIKT) and 288–310 (VSEV…VIEQ). N-linked (GlcNAc...) asparagine glycosylation occurs at Asn-261. 2 disulfides stabilise this stretch: Cys-349–Cys-354 and Cys-373–Cys-382.

Belongs to the glycosyl hydrolase 28 family.

The protein localises to the secreted. The enzyme catalyses (1,4-alpha-D-galacturonosyl)n+m + H2O = (1,4-alpha-D-galacturonosyl)n + (1,4-alpha-D-galacturonosyl)m.. Involved in maceration and soft-rotting of plant tissue. Hydrolyzes the 1,4-alpha glycosidic bonds of de-esterified pectate in the smooth region of the plant cell wall. This Aspergillus niger (strain ATCC MYA-4892 / CBS 513.88 / FGSC A1513) protein is Probable endopolygalacturonase C (pgaC).